We begin with the raw amino-acid sequence, 407 residues long: Serine/threonine transporter SstT (407 aa).

A run of 9 helical transmembrane segments spans residues 12–32 (GNLIVQICIGIVLGILIGISS), 42–62 (LGILFTSALKAIAPMLVFILI), 81–101 (IIILYIVGTFLASACAVLANF), 141–161 (ALSSGNYLGILTWAIAGGIAL), 179–199 (VLKIVKFIVKLAPFGIFGLVA), 218–238 (ILLVTTMLFVTFVINALIVFF), 245–267 (FPLIFICLRHSAFFAFFTRSSAA), 288–308 (ISIPLGATINMAGAAVTIAIL), and 330–350 (IIATFAACGASGVAGGSLLLI).

It belongs to the dicarboxylate/amino acid:cation symporter (DAACS) (TC 2.A.23) family.

It localises to the cell inner membrane. The enzyme catalyses L-serine(in) + Na(+)(in) = L-serine(out) + Na(+)(out). The catalysed reaction is L-threonine(in) + Na(+)(in) = L-threonine(out) + Na(+)(out). Involved in the import of serine and threonine into the cell, with the concomitant import of sodium (symport system). The protein is Serine/threonine transporter SstT of Campylobacter jejuni subsp. jejuni serotype O:6 (strain 81116 / NCTC 11828).